Reading from the N-terminus, the 302-residue chain is N-acetyl-D-glucosamine kinase (302 aa).

Residues 4-11 (GFDVGGTK) and 133-140 (GFGGGLVF) contribute to the ATP site. Zn(2+)-binding residues include H157, C177, C179, and C184.

Belongs to the ROK (NagC/XylR) family. NagK subfamily.

It catalyses the reaction N-acetyl-D-glucosamine + ATP = N-acetyl-D-glucosamine 6-phosphate + ADP + H(+). Its pathway is cell wall biogenesis; peptidoglycan recycling. Its function is as follows. Catalyzes the phosphorylation of N-acetyl-D-glucosamine (GlcNAc) derived from cell-wall degradation, yielding GlcNAc-6-P. This is N-acetyl-D-glucosamine kinase from Aliivibrio salmonicida (strain LFI1238) (Vibrio salmonicida (strain LFI1238)).